Reading from the N-terminus, the 550-residue chain is Chaperonin GroEL (550 aa).

Residues 30 to 33 (TLGP), Lys-51, 87 to 91 (DGTTT), Gly-415, and Asp-496 each bind ATP.

It belongs to the chaperonin (HSP60) family. Forms a cylinder of 14 subunits composed of two heptameric rings stacked back-to-back. Interacts with the co-chaperonin GroES.

The protein localises to the cytoplasm. The enzyme catalyses ATP + H2O + a folded polypeptide = ADP + phosphate + an unfolded polypeptide.. Functionally, together with its co-chaperonin GroES, plays an essential role in assisting protein folding. The GroEL-GroES system forms a nano-cage that allows encapsulation of the non-native substrate proteins and provides a physical environment optimized to promote and accelerate protein folding. This Rickettsia typhi (strain ATCC VR-144 / Wilmington) protein is Chaperonin GroEL.